Consider the following 385-residue polypeptide: Na(+)/H(+) antiporter NhaA (385 aa).

The next 11 membrane-spanning stretches (helical) occupy residues 9-29, 45-65, 87-107, 114-134, 155-175, 198-218, 220-235, 245-265, 282-302, 312-332, and 345-365; these read YSAI…NVLD, IFGL…VFFF, IIPG…YLSV, GWPV…AIFG, AGIV…WIIV, TFLI…SVYQ, GIHA…IMLN, ALEP…AAMV, ILLG…IIAL, FFNL…SLLM, and QGVI…IILM.

Belongs to the NhaA Na(+)/H(+) (TC 2.A.33) antiporter family.

Its subcellular location is the cell membrane. The catalysed reaction is Na(+)(in) + 2 H(+)(out) = Na(+)(out) + 2 H(+)(in). Its function is as follows. Na(+)/H(+) antiporter that extrudes sodium in exchange for external protons. This Tropheryma whipplei (strain TW08/27) (Whipple's bacillus) protein is Na(+)/H(+) antiporter NhaA.